A 54-amino-acid chain; its full sequence is U1-ctenitoxin-Pr1a (54 aa).

5 disulfides stabilise this stretch: Cys-2–Cys-19, Cys-9–Cys-25, Cys-16–Cys-51, Cys-18–Cys-39, and Cys-27–Cys-37.

Expressed by the venom gland.

Its subcellular location is the secreted. Its function is as follows. Omega-agatoxins are antagonists of voltage-gated calcium channels (Cav). Causes rapid general flaccid paralysis followed by death in 10-30 minutes when injected in mice at dose levels of 5 ug per mouse. The sequence is that of U1-ctenitoxin-Pr1a from Phoneutria reidyi (Brazilian Amazonian armed spider).